A 115-amino-acid polypeptide reads, in one-letter code: Selenoprotein K homolog (115 aa).

A helical membrane pass occupies residues 29–49 (FIWGILNQITFFFSTLIGGTV). Residues 48–115 (TVEPRRRPNN…NSASGSUGPK (68 aa)) form a disordered region. Residues 58–84 (QGGGRRLAGFDGNGNVTGGSGVGGSGP) show a composition bias toward gly residues. A compositionally biased stretch (polar residues) spans 104–115 (ACNSASGSUGPK). Residue Sec112 is a non-standard amino acid, selenocysteine.

This sequence belongs to the selenoprotein K family.

The protein localises to the membrane. This Dictyostelium discoideum (Social amoeba) protein is Selenoprotein K homolog (selk).